A 1828-amino-acid polypeptide reads, in one-letter code: Dedicator of cytokinesis protein 2 (1828 aa).

The SH3 domain maps to 8–69 (DKERHGVAIY…PTSFIHLKEV (62 aa)). Lys-304 bears the N6-acetyllysine mark. The 185-residue stretch at 423–607 (RNDIYITLLQ…DVFSISTLVC (185 aa)) folds into the C2 DOCK-type domain. A phosphoserine mark is found at Ser-588 and Ser-593. Lys-738 bears the N6-acetyllysine mark. A DOCKER domain is found at 1210–1621 (YKDNNREEMY…VEKEYGVREM (412 aa)). Residues 1652–1703 (SDCSTPSKVPAESFDLESAPPKTPKVEEEPISPGSTLPEVKLRRSKKRTKRS) form a disordered region. Ser-1683, Ser-1704, Ser-1729, and Ser-1782 each carry phosphoserine.

Belongs to the DOCK family. In terms of assembly, homodimer. Interacts with RAC1 and RAC2. Interacts with CRKL and VAV. Interacts with CD3Z. In terms of tissue distribution, specifically expressed in hematopoietic cells.

It is found in the endomembrane system. It localises to the cytoplasm. Its subcellular location is the cytoskeleton. Functionally, involved in cytoskeletal rearrangements required for lymphocyte migration in response of chemokines. Activates RAC1 and RAC2, but not CDC42, by functioning as a guanine nucleotide exchange factor (GEF), which exchanges bound GDP for free GTP. May also participate in IL2 transcriptional activation via the activation of RAC2. The protein is Dedicator of cytokinesis protein 2 (Dock2) of Mus musculus (Mouse).